Reading from the N-terminus, the 240-residue chain is Ribonuclease PH (240 aa).

Phosphate-binding positions include Arg87 and 125-127 (GTR).

This sequence belongs to the RNase PH family. As to quaternary structure, homohexameric ring arranged as a trimer of dimers.

It catalyses the reaction tRNA(n+1) + phosphate = tRNA(n) + a ribonucleoside 5'-diphosphate. Phosphorolytic 3'-5' exoribonuclease that plays an important role in tRNA 3'-end maturation. Removes nucleotide residues following the 3'-CCA terminus of tRNAs; can also add nucleotides to the ends of RNA molecules by using nucleoside diphosphates as substrates, but this may not be physiologically important. Probably plays a role in initiation of 16S rRNA degradation (leading to ribosome degradation) during starvation. This is Ribonuclease PH from Pseudomonas fluorescens (strain ATCC BAA-477 / NRRL B-23932 / Pf-5).